Reading from the N-terminus, the 292-residue chain is tRNA-cytidine(32) 2-sulfurtransferase (292 aa).

A PP-loop motif motif is present at residues 53–58 (SGGKDS). Residues Cys-128, Cys-131, and Cys-219 each contribute to the [4Fe-4S] cluster site.

Belongs to the TtcA family. Homodimer. It depends on Mg(2+) as a cofactor. The cofactor is [4Fe-4S] cluster.

The protein localises to the cytoplasm. It catalyses the reaction cytidine(32) in tRNA + S-sulfanyl-L-cysteinyl-[cysteine desulfurase] + AH2 + ATP = 2-thiocytidine(32) in tRNA + L-cysteinyl-[cysteine desulfurase] + A + AMP + diphosphate + H(+). It participates in tRNA modification. In terms of biological role, catalyzes the ATP-dependent 2-thiolation of cytidine in position 32 of tRNA, to form 2-thiocytidine (s(2)C32). The sulfur atoms are provided by the cysteine/cysteine desulfurase (IscS) system. This chain is tRNA-cytidine(32) 2-sulfurtransferase, found in Cereibacter sphaeroides (strain ATCC 17029 / ATH 2.4.9) (Rhodobacter sphaeroides).